The primary structure comprises 163 residues: Putative pre-16S rRNA nuclease (163 aa).

Belongs to the YqgF nuclease family.

The protein resides in the cytoplasm. Could be a nuclease involved in processing of the 5'-end of pre-16S rRNA. The polypeptide is Putative pre-16S rRNA nuclease (Nitrobacter hamburgensis (strain DSM 10229 / NCIMB 13809 / X14)).